The sequence spans 829 residues: DNA topoisomerase 1 (829 aa).

Positions 1–248 are disordered; that stretch reads MSEDHVQNDS…AKGNEEGVKK (248 aa). The segment covering 22-36 has biased composition (basic residues); the sequence is HKHKKDKEHRHKEHK. Basic and acidic residues-rich tracts occupy residues 37 to 58, 68 to 159, and 193 to 220; these read KDKDREKSKHNNSEHRDPSEKK, KHRE…EKMK, and KENKAMKRPREDDEDYKPKKIKSEDDKK. 3 interaction with DNA regions span residues 481-482, 544-549, and 641-643; these read KY, RAGNEK, and TAK. A Topo IB-type catalytic domain is found at 488–821; the sequence is SSRIKGEKDW…SIWQTTTSNF (334 aa). Y779 (O-(3'-phospho-DNA)-tyrosine intermediate) is an active-site residue.

Belongs to the type IB topoisomerase family. In terms of assembly, monomer.

It is found in the nucleus. The catalysed reaction is ATP-independent breakage of single-stranded DNA, followed by passage and rejoining.. In terms of biological role, releases the supercoiling and torsional tension of DNA introduced during the DNA replication and transcription by transiently cleaving and rejoining one strand of the DNA duplex. Introduces a single-strand break via transesterification at a target site in duplex DNA. The scissile phosphodiester is attacked by the catalytic tyrosine of the enzyme, resulting in the formation of a DNA-(3'-phosphotyrosyl)-enzyme intermediate and the expulsion of a 5'-OH DNA strand. TThe free DNA strand then rotates around the intact phosphodiester bond on the opposing strand, thus removing DNA supercoils. Finally, in the religation step, the DNA 5'-OH attacks the covalent intermediate to expel the active-site tyrosine and restore the DNA phosphodiester backbone. May play a role in the circadian transcription of the core circadian clock component BMAL1. In Xenopus laevis (African clawed frog), this protein is DNA topoisomerase 1 (top1).